Reading from the N-terminus, the 520-residue chain is MKTKELTQSKIEEVSLEILLRHAVKAKHGLEKESMRVNPDGTLSGTTHPIHLGSSLTNHYIKTDFAEPQLEYATHPRPKVEANIRELQDLHIFTIRKLENELIWPFSMPPVLPEEENEIPLGQYGTSHSGRWKTIYRHGLGLRYGRRMQTISGVHYNFSFSKVFLRQFLGKEISNFTKEEISSLYLHVIRNFLRRVHFLTYLTGSSPVFDFTFLPNPGSLKFEKHKNFTLYSTYATSLRMSEIGYTSKVQDTLGIHYNSLEEYVDRMCYAVHTPYPKYVSFSENKDAQLNPNYLQIENEFYSPIRPKQVPKGDERPLDALLQRGIEYIEIRSLDIDPYSPVGVCRSNLAFTQLILLDSLLKVSPSISEEENFSLKENLNSVIWEGRNPELKINVNGSKRNFQEAGAEYSESLRHYAKILDLHTGRRTYQEAIDFQIKKWKNPDKTPSGKLLSEILKRNIEFREKGIELAQENKRMFSYLEYSPGTLMKMEKETIRSFQEKEELEKQEIQTQYPTVKLCNH.

This sequence belongs to the glutamate--cysteine ligase type 1 family. Type 1 subfamily.

It carries out the reaction L-cysteine + L-glutamate + ATP = gamma-L-glutamyl-L-cysteine + ADP + phosphate + H(+). The protein operates within sulfur metabolism; glutathione biosynthesis; glutathione from L-cysteine and L-glutamate: step 1/2. This Leptospira interrogans serogroup Icterohaemorrhagiae serovar Lai (strain 56601) protein is Glutamate--cysteine ligase.